Here is a 328-residue protein sequence, read N- to C-terminus: Beta-ketoacyl-[acyl-carrier-protein] synthase III (328 aa).

Catalysis depends on residues Cys122 and His255. An ACP-binding region spans residues 256-260 (QANVR). Asn285 is a catalytic residue.

This sequence belongs to the thiolase-like superfamily. FabH family. In terms of assembly, homodimer.

It is found in the cytoplasm. It carries out the reaction malonyl-[ACP] + acetyl-CoA + H(+) = 3-oxobutanoyl-[ACP] + CO2 + CoA. It functions in the pathway lipid metabolism; fatty acid biosynthesis. Its function is as follows. Catalyzes the condensation reaction of fatty acid synthesis by the addition to an acyl acceptor of two carbons from malonyl-ACP. Catalyzes the first condensation reaction which initiates fatty acid synthesis and may therefore play a role in governing the total rate of fatty acid production. Possesses both acetoacetyl-ACP synthase and acetyl transacylase activities. Its substrate specificity determines the biosynthesis of branched-chain and/or straight-chain of fatty acids. The polypeptide is Beta-ketoacyl-[acyl-carrier-protein] synthase III (Bordetella petrii (strain ATCC BAA-461 / DSM 12804 / CCUG 43448)).